A 257-amino-acid chain; its full sequence is Transcription factor LBX2 (257 aa).

Residues 1–43 (MTSSSKDMKAGSVLQSSGEERRRGPLDQLPPPANSNKPLTPFS) are disordered. The interval 1–46 (MTSSSKDMKAGSVLQSSGEERRRGPLDQLPPPANSNKPLTPFSIED) is required for convergent extension movement and hypaxial myogenesis during gastrulation. Required for the formation of thick and thin myofilaments. Required for myod1 expression in the pectoral fin bud. Required for continuous expression of cxcl12a in the posterior lateral mesoderm at the tail bud stage and in adaxial cells at the 10-somite stage. Positions 126 to 185 (RRKSRTAFTNHQIYELEKRFLYQKYLSPADRDQIAQQLGLTNAQVITWFQNRRAKLKRDL) form a DNA-binding region, homeobox. Positions 206 to 257 (LVSMEDMEDAHGGSGPISPSLSPRAFPQSPSSSRGQTTDEFSEEDEEIEVDD) are disordered. Over residues 233-243 (QSPSSSRGQTT) the composition is skewed to polar residues. Acidic residues predominate over residues 245-257 (EFSEEDEEIEVDD).

Interacts (via N-terminus) with tle3a/gro2 (via C-terminus).

The protein localises to the nucleus. Its function is as follows. Transcription factor required in several developmental processes. Involved in axis formation during embryonic development by inhibiting tle3a/gro2 from binding to tcf7l1a, thereby facilitating ctnnb1-mediated transcription of canonical Wnt/CTNNB1 signaling target genes. Regulates convergent extension movements and hypaxial myogenesis during gastrulation by activating non-canonical Wnt signaling via wnt5b. Required for the formation of myofibrils and fusion of fast muscle precursor cells, potentially via transcriptional regulation of genes specific to thick and thin myofilaments. Regulates the migration of the posterior lateral line primordium during embryonic development, possibly via regulation of cxcl12a/sdf1a expression in the posterior lateral mesoderm, thereby modulating the deposition of neuromasts at correct intervals. This chain is Transcription factor LBX2, found in Danio rerio (Zebrafish).